The chain runs to 127 residues: Succinate dehydrogenase cytochrome b560 subunit (127 aa).

A run of 2 helical transmembrane segments spans residues 36 to 53 and 60 to 83; these read VGLA…RIIL and NLLT…FILL. His-88 is a heme binding site. The chain crosses the membrane as a helical span at residues 109–126; that stretch reads LSKFSLFLLVSLSLILIF.

It belongs to the cytochrome b560 family. In terms of assembly, forms part of complex II containing four subunits: a 70 kDa flavoprotein (FP), a 27 kDa iron-sulfur protein (IP), a cytochrome B and a membrane-anchoring protein. Heme is required as a cofactor.

It localises to the mitochondrion inner membrane. The protein operates within carbohydrate metabolism; tricarboxylic acid cycle. Its function is as follows. Membrane-anchoring subunit of succinate dehydrogenase (SDH) that is involved in complex II of the mitochondrial electron transport chain and is responsible for transferring electrons from succinate to ubiquinone (coenzyme Q). The chain is Succinate dehydrogenase cytochrome b560 subunit (SDH3) from Chondrus crispus (Carrageen Irish moss).